Here is a 519-residue protein sequence, read N- to C-terminus: Acetylcholine receptor subunit beta-like 2 (519 aa).

A signal peptide spans 1-18 (MWHWSLLCVFLLVPLANS). Residues 19-244 (TAPISFEANP…ITFKLTMRRK (226 aa)) are Extracellular-facing. The N-linked (GlcNAc...) asparagine glycan is linked to asparagine 50. A disulfide bridge connects residues cysteine 154 and cysteine 168. 3 helical membrane passes run 245–269 (TLFY…VFYL), 277–295 (VTLC…LLLA), and 311–332 (YLLF…VLNI). Over 333–462 (HFRSPSTHNM…WKFVSMVLDR (130 aa)) the chain is Cytoplasmic. The chain crosses the membrane as a helical span at residues 463–481 (FFLWLFTLSCVFGTLAIIC).

The protein belongs to the ligand-gated ion channel (TC 1.A.9) family. Acetylcholine receptor (TC 1.A.9.1) subfamily. In terms of tissue distribution, CNS in embryos.

The protein resides in the postsynaptic cell membrane. The protein localises to the cell membrane. In terms of biological role, after binding acetylcholine, the AChR responds by an extensive change in conformation that affects all subunits and leads to opening of an ion-conducting channel across the plasma membrane. The chain is Acetylcholine receptor subunit beta-like 2 (nAChRbeta2) from Drosophila melanogaster (Fruit fly).